Here is a 102-residue protein sequence, read N- to C-terminus: Large ribosomal subunit protein bL21 (102 aa).

Belongs to the bacterial ribosomal protein bL21 family. Part of the 50S ribosomal subunit. Contacts protein L20.

Functionally, this protein binds to 23S rRNA in the presence of protein L20. This chain is Large ribosomal subunit protein bL21, found in Leptospira biflexa serovar Patoc (strain Patoc 1 / Ames).